A 394-amino-acid polypeptide reads, in one-letter code: NAD(P)H-quinone oxidoreductase subunit H (394 aa).

The protein belongs to the complex I 49 kDa subunit family. As to quaternary structure, NDH-1 can be composed of about 15 different subunits; different subcomplexes with different compositions have been identified which probably have different functions.

It localises to the cellular thylakoid membrane. It carries out the reaction a plastoquinone + NADH + (n+1) H(+)(in) = a plastoquinol + NAD(+) + n H(+)(out). The catalysed reaction is a plastoquinone + NADPH + (n+1) H(+)(in) = a plastoquinol + NADP(+) + n H(+)(out). NDH-1 shuttles electrons from an unknown electron donor, via FMN and iron-sulfur (Fe-S) centers, to quinones in the respiratory and/or the photosynthetic chain. The immediate electron acceptor for the enzyme in this species is believed to be plastoquinone. Couples the redox reaction to proton translocation, and thus conserves the redox energy in a proton gradient. Cyanobacterial NDH-1 also plays a role in inorganic carbon-concentration. This chain is NAD(P)H-quinone oxidoreductase subunit H, found in Prochlorococcus marinus (strain SARG / CCMP1375 / SS120).